We begin with the raw amino-acid sequence, 793 residues long: Signal transducer and activator of transcription 5A (793 aa).

Residue Tyr-90 is modified to Phosphotyrosine. Ser-128 bears the Phosphoserine mark. The SH2 domain occupies 589–686 (WNDGAILGFV…EVFAKYYTPV (98 aa)). Tyr-682 and Tyr-694 each carry phosphotyrosine. Ser-779 is subject to Phosphoserine.

Belongs to the transcription factor STAT family. Forms a homodimer or a heterodimer with a related family member. Interacts with NCOA1 and SOCS7. Binds NR3C1. Interacts with ERBB4. Interacts with EBF4. Interacts with CD69. ISGylated. In terms of processing, tyrosine phosphorylated in response to KITLG/SCF, IL2, IL3, IL7, IL15, CSF2/GMCSF, GH1, PRL, EPO and THPO. Activated KIT promotes phosphorylation on tyrosine residues and subsequent translocation to the nucleus. Tyrosine phosphorylated in response to constitutively activated FGFR1, FGFR2, FGFR3 and FGFR4. Tyrosine phosphorylation is required for DNA-binding activity and dimerization. Serine phosphorylation is also required for maximal transcriptional activity. Tyrosine phosphorylated in response to signaling via activated FLT3; wild-type FLT3 results in much weaker phosphorylation than constitutively activated mutant FLT3. Alternatively, can be phosphorylated by JAK2 at Tyr-694. In the virgin, found in most tissues except brain and muscle. During lactation, abundantly found in mammary tissue, as well as in other secretory organs such as salivary gland and seminal vesicle.

Its subcellular location is the cytoplasm. The protein resides in the nucleus. Its function is as follows. Carries out a dual function: signal transduction and activation of transcription. Mediates cellular responses to the cytokine KITLG/SCF and other growth factors. May mediate cellular responses to activated FGFR1, FGFR2, FGFR3 and FGFR4. Binds to the GAS element and activates PRL-induced transcription. Regulates the expression of milk proteins during lactation. This Mus musculus (Mouse) protein is Signal transducer and activator of transcription 5A (Stat5a).